The primary structure comprises 89 residues: Large ribosomal subunit protein bL28 (89 aa).

It belongs to the bacterial ribosomal protein bL28 family.

The protein is Large ribosomal subunit protein bL28 of Chlamydia pneumoniae (Chlamydophila pneumoniae).